The sequence spans 550 residues: Acidic amino acid decarboxylase GADL1 (550 aa).

Residue Lys362 is modified to N6-(pyridoxal phosphate)lysine.

It belongs to the group II decarboxylase family. As to quaternary structure, homodimer. Pyridoxal 5'-phosphate is required as a cofactor. In terms of tissue distribution, expressed in skeletal muscles and kidney (at protein level). Expressed in skeletal muscle and weakly in brain. Not expressed in liver or kidney. Expressed in brain, olfactory bulb, liver, muscle and kidney with the highest expression in olfactory bulb and almost not detected in liver (at protein level).

It catalyses the reaction L-aspartate + H(+) = beta-alanine + CO2. It carries out the reaction 3-sulfino-L-alanine + H(+) = hypotaurine + CO2. The enzyme catalyses L-cysteate + H(+) = taurine + CO2. With respect to regulation, activated weakly by 0.2-0.4 mM Li(+). Inhibited by bis-carboxymethyl-trithiocarbonate, ethylxanthogenacetic acid and 2,5-disulfoaniline. Its function is as follows. Catalyzes the decarboxylation of L-aspartate, 3-sulfino-L-alanine (cysteine sulfinic acid), and L-cysteate to beta-alanine, hypotaurine and taurine, respectively. The preferred substrate is L-aspartate. Does not exhibit any decarboxylation activity toward glutamate. The sequence is that of Acidic amino acid decarboxylase GADL1 from Mus musculus (Mouse).